Consider the following 459-residue polypeptide: Probable D-serine dehydratase (459 aa).

Residue Lys-119 is modified to N6-(pyridoxal phosphate)lysine.

Belongs to the serine/threonine dehydratase family. DsdA subfamily. It depends on pyridoxal 5'-phosphate as a cofactor.

It carries out the reaction D-serine = pyruvate + NH4(+). This Geobacillus stearothermophilus (Bacillus stearothermophilus) protein is Probable D-serine dehydratase.